Here is a 252-residue protein sequence, read N- to C-terminus: Protein UL24 homolog (252 aa).

A disordered region spans residues 215 to 252 (SVLTKTSGENRSRASRQVAKNAPKNRIRRTAKKDAKRQ). Basic residues predominate over residues 237-252 (PKNRIRRTAKKDAKRQ).

It belongs to the herpesviridae UL24 family.

The protein resides in the virion. Its subcellular location is the host cytoplasm. It is found in the host nucleus. The protein localises to the host nucleolus. It localises to the host Golgi apparatus. May participate in nuclear egress of viral particles. Plays a role in the dispersal of several host nucleolar proteins including NCL/nucleolin and NPM1. Since deletion of host NCL/nucleolin negatively impact on nuclear egress, UL24 supposedly acts on this process through its effect on host nucleoli. The polypeptide is Protein UL24 homolog (U49) (Homo sapiens (Human)).